The primary structure comprises 300 residues: MNTLVLKIDAILSKHLKKQLAPYTISSQNTYVAFAAKKNGVTVLLYKSGKLVLQGNGANALAQELNLPVAKTVFEASNNSQDIPIIGSDEVGNGSYFGGIAVVASFVDPKDHPFLKKLGVDDSKKLSDKTIQQIAPLLEKQIPHQSLLLSPKKYNELVGKSKPYNAISIKVALHNQAIFLLLQKGIQPKQIVIDAFTSQSNYEKHLKKEKNHFPNPLTFQEKAESHYLAVAVSSIIARNLFLDNLDQLGQDLGYQLPSGAGSASDKVASQLLAAYGMSSLEYSAKLHFANTHKAQALLTK.

One can recognise an RNase H type-2 domain in the interval 83 to 300 (IPIIGSDEVG…THKAQALLTK (218 aa)). A divalent metal cation contacts are provided by D89, E90, and D194.

This sequence belongs to the RNase HII family. RnhC subfamily. The cofactor is Mn(2+). Mg(2+) serves as cofactor.

The protein resides in the cytoplasm. The catalysed reaction is Endonucleolytic cleavage to 5'-phosphomonoester.. Endonuclease that specifically degrades the RNA of RNA-DNA hybrids. This Streptococcus pyogenes serotype M2 (strain MGAS10270) protein is Ribonuclease HIII.